The primary structure comprises 225 residues: MAAEFNNDWDDLLKDEFKKEYYLNLRKFLINEYKTQKIHPSMYDIFNALKFTPYKDVKVVILGQDPYHGPNQAHGFSFSVKPGVQTPPSLRNMFKELNSDLGCYIPNNGFLESWAKQGILLLNTVLTVREGQANSHKGKGWEIFTDRVIELLNKREEPIVFILWGRNAISKEALITNPIHKIIKSVHPSPLSATRGFFGSKPFSKTNDFLVSINKEPIDWQIPNI.

D65 functions as the Proton acceptor in the catalytic mechanism.

The protein belongs to the uracil-DNA glycosylase (UDG) superfamily. UNG family.

The protein resides in the cytoplasm. The enzyme catalyses Hydrolyzes single-stranded DNA or mismatched double-stranded DNA and polynucleotides, releasing free uracil.. Excises uracil residues from the DNA which can arise as a result of misincorporation of dUMP residues by DNA polymerase or due to deamination of cytosine. This chain is Uracil-DNA glycosylase, found in Clostridium perfringens (strain 13 / Type A).